The following is a 579-amino-acid chain: Arginine--tRNA ligase (579 aa).

The 'HIGH' region motif lies at 136–146 (ANPTGPLHIGH).

This sequence belongs to the class-I aminoacyl-tRNA synthetase family. As to quaternary structure, monomer.

The protein resides in the cytoplasm. It catalyses the reaction tRNA(Arg) + L-arginine + ATP = L-arginyl-tRNA(Arg) + AMP + diphosphate. This is Arginine--tRNA ligase from Anaplasma marginale (strain St. Maries).